The primary structure comprises 178 residues: uncharacterized protein (178 aa).

Positions 1–20 (MKKLLVASLALLILTPVALA) are cleaved as a signal peptide.

This is an uncharacterized protein from Archaeoglobus fulgidus (strain ATCC 49558 / DSM 4304 / JCM 9628 / NBRC 100126 / VC-16).